A 263-amino-acid polypeptide reads, in one-letter code: MTITEPYSPNNQPITFAQITDSHLFSSVDGLHHGHNVLANLKKVLLSICDNPSIKYIIFTGDLTQDHTEQSYQNFVDCVLECHITVPIYYLAGNHDEPKLLDKYFSASPFQADKEINLSHWQVQLVDSKSATPAGYVGEQALVKLKDAIQKNKNQLLMMHHHPIDVGYFIDKHGLQNKDAFWQVINSYDNIKAIACGHVHGDMTLTNAITSPINEPVVLYTCPATSIQFDPTVDGVAALSKGPGYRLFSLYADGQLNTEVVML.

Residues aspartate 21, histidine 23, aspartate 62, asparagine 94, histidine 160, histidine 198, and histidine 200 each contribute to the Fe cation site. Residues histidine 23, aspartate 62, and 94-95 (NH) contribute to the AMP site. AMP is bound at residue histidine 200.

Belongs to the cyclic nucleotide phosphodiesterase class-III family. The cofactor is Fe(2+).

The sequence is that of Probable cyclic nucleotide phosphodiesterase CPS_4178 from Colwellia psychrerythraea (strain 34H / ATCC BAA-681) (Vibrio psychroerythus).